A 415-amino-acid chain; its full sequence is Corticotropin-releasing factor receptor 1 (415 aa).

Positions 1 to 23 (MGRRPQLRLVKALLLLGLNPVST) are cleaved as a signal peptide. The Extracellular portion of the chain corresponds to 24-111 (SLQDQRCENL…CQEILNEEKK (88 aa)). 3 cysteine pairs are disulfide-bonded: C30/C54, C44/C87, and C68/C102. N-linked (GlcNAc...) asparagine glycans are attached at residues N38, N45, N78, N90, and N98. Positions 99–108 (YSECQEILNE) are important for peptide agonist binding. A helical membrane pass occupies residues 112 to 142 (SKVHYHVAVIINYLGHCISLVALLVAFVLFL). The Cytoplasmic portion of the chain corresponds to 143 to 149 (RLRSIRC). The chain crosses the membrane as a helical span at residues 150–174 (LRNIIHWNLISAFILRNATWFVVQL). The Extracellular segment spans residues 175 to 189 (TVSPEVHQSNVAWCR). C188 and C258 are disulfide-bonded. A helical transmembrane segment spans residues 190–218 (LVTAAYNYFHVTNFFWMFGEGCYLHTAIV). Topologically, residues 219–225 (LTYSTDR) are cytoplasmic. The chain crosses the membrane as a helical span at residues 226 to 253 (LRKWMFVCIGWGVPFPIIVAWAIGKLHY). Residues 254–269 (DNEKCWFGKRPGVYTD) are Extracellular-facing. A helical membrane pass occupies residues 270–295 (YIYQGPMILVLLINFIFLFNIVRILM). The important for antagonist binding stretch occupies residues 280–290 (LLINFIFLFNI). The Cytoplasmic segment spans residues 296–306 (TKLRASTTSET). S301 is subject to Phosphoserine; by PKA. Residues 307 to 331 (IQYRKAVKATLVLLPLLGITYMLFF) traverse the membrane as a helical segment. The Extracellular segment spans residues 332–338 (VNPGEDE). Residues 339–368 (VSRVVFIYFNSFLESFQGFFVSVFYCFLNS) form a helical membrane-spanning segment. At 369–415 (EVRSAIRKRWRRWQDKHSIRARVARAMSIPTSPTRVSFHSIKQSTAV) the chain is on the cytoplasmic side.

Belongs to the G-protein coupled receptor 2 family. In terms of assembly, interacts (via N-terminal extracellular domain) with CRH and UCN. Interacts with DLG1; this inhibits endocytosis of CRHR1 after agonist binding. Heterodimer; heterodimerizes with GPER1. Post-translationally, C-terminal Ser or Thr residues may be phosphorylated. In terms of processing, phosphorylation at Ser-301 by PKA prevents maximal coupling to Gq-protein, and thereby negatively regulates downstream signaling. Detected in brain, especially in cerebellum. Detected in pituitary gland, and at lower levels in the olfactory bulb.

It is found in the cell membrane. It localises to the endosome. Functionally, G-protein coupled receptor for CRH (corticotropin-releasing factor) and UCN (urocortin). Has high affinity for CRH and UCN. Ligand binding causes a conformation change that triggers signaling via guanine nucleotide-binding proteins (G proteins) and down-stream effectors, such as adenylate cyclase. Promotes the activation of adenylate cyclase, leading to increased intracellular cAMP levels. Inhibits the activity of the calcium channel CACNA1H. Required for normal embryonic development of the adrenal gland and for normal hormonal responses to stress. Plays a role in the response to anxiogenic stimuli. The sequence is that of Corticotropin-releasing factor receptor 1 (Crhr1) from Rattus norvegicus (Rat).